A 48-amino-acid polypeptide reads, in one-letter code: Large ribosomal subunit protein bL33B (48 aa).

It belongs to the bacterial ribosomal protein bL33 family.

The polypeptide is Large ribosomal subunit protein bL33B (Lactococcus lactis subsp. cremoris (strain MG1363)).